The following is a 118-amino-acid chain: Holo-[acyl-carrier-protein] synthase (118 aa).

Mg(2+) contacts are provided by aspartate 8 and glutamate 60.

Belongs to the P-Pant transferase superfamily. AcpS family. Mg(2+) serves as cofactor.

The protein resides in the cytoplasm. The catalysed reaction is apo-[ACP] + CoA = holo-[ACP] + adenosine 3',5'-bisphosphate + H(+). In terms of biological role, transfers the 4'-phosphopantetheine moiety from coenzyme A to a Ser of acyl-carrier-protein. The sequence is that of Holo-[acyl-carrier-protein] synthase from Wolbachia sp. subsp. Drosophila simulans (strain wRi).